The sequence spans 354 residues: S-adenosylmethionine:tRNA ribosyltransferase-isomerase (354 aa).

It belongs to the QueA family. Monomer.

The protein resides in the cytoplasm. It carries out the reaction 7-aminomethyl-7-carbaguanosine(34) in tRNA + S-adenosyl-L-methionine = epoxyqueuosine(34) in tRNA + adenine + L-methionine + 2 H(+). Its pathway is tRNA modification; tRNA-queuosine biosynthesis. Its function is as follows. Transfers and isomerizes the ribose moiety from AdoMet to the 7-aminomethyl group of 7-deazaguanine (preQ1-tRNA) to give epoxyqueuosine (oQ-tRNA). This is S-adenosylmethionine:tRNA ribosyltransferase-isomerase from Salmonella paratyphi A (strain ATCC 9150 / SARB42).